We begin with the raw amino-acid sequence, 151 residues long: Large ribosomal subunit protein uL16 (151 aa).

It belongs to the universal ribosomal protein uL16 family. As to quaternary structure, part of the 50S ribosomal subunit.

In terms of biological role, binds 23S rRNA and is also seen to make contacts with the A and possibly P site tRNAs. This is Large ribosomal subunit protein uL16 from Chloroflexus aurantiacus (strain ATCC 29364 / DSM 637 / Y-400-fl).